The chain runs to 176 residues: Adenine phosphoribosyltransferase (176 aa).

This sequence belongs to the purine/pyrimidine phosphoribosyltransferase family. Homodimer.

Its subcellular location is the cytoplasm. The enzyme catalyses AMP + diphosphate = 5-phospho-alpha-D-ribose 1-diphosphate + adenine. It functions in the pathway purine metabolism; AMP biosynthesis via salvage pathway; AMP from adenine: step 1/1. Functionally, catalyzes a salvage reaction resulting in the formation of AMP, that is energically less costly than de novo synthesis. The sequence is that of Adenine phosphoribosyltransferase from Borreliella burgdorferi (strain ATCC 35210 / DSM 4680 / CIP 102532 / B31) (Borrelia burgdorferi).